The following is a 503-amino-acid chain: Protein-cysteine N-palmitoyltransferase HHAT-like protein (503 aa).

Transmembrane regions (helical) follow at residues 12–31 (LGLY…RGLL), 65–87 (WVMW…VLFA), 100–122 (WMYA…LLLL), 127–149 (MVLY…LASL), 250–272 (AGLS…ILTI), 287–309 (LAGL…FGVV), 426–445 (VRAL…NLVS), and 460–482 (ILTG…VQLV).

Belongs to the membrane-bound acyltransferase family. HHAT subfamily. As to quaternary structure, interacts with SHH.

The protein localises to the endoplasmic reticulum membrane. Negatively regulates N-terminal palmitoylation of SHH by HHAT/SKN. This chain is Protein-cysteine N-palmitoyltransferase HHAT-like protein (Hhatl), found in Mus musculus (Mouse).